The sequence spans 429 residues: Adenylosuccinate synthetase (429 aa).

Residues G12–K18 and G40–T42 contribute to the GTP site. Residue D13 is the Proton acceptor of the active site. The Mg(2+) site is built by D13 and G40. Residues D13–K16, N38–H41, T129, R143, Q223, T238, and R302 each bind IMP. H41 functions as the Proton donor in the catalytic mechanism. A substrate-binding site is contributed by T298 to R304. GTP-binding positions include R304, K330–D332, and S412–S414.

This sequence belongs to the adenylosuccinate synthetase family. Homodimer. The cofactor is Mg(2+).

It localises to the cytoplasm. It carries out the reaction IMP + L-aspartate + GTP = N(6)-(1,2-dicarboxyethyl)-AMP + GDP + phosphate + 2 H(+). It functions in the pathway purine metabolism; AMP biosynthesis via de novo pathway; AMP from IMP: step 1/2. Its function is as follows. Plays an important role in the de novo pathway of purine nucleotide biosynthesis. Catalyzes the first committed step in the biosynthesis of AMP from IMP. This chain is Adenylosuccinate synthetase, found in Zymomonas mobilis subsp. mobilis (strain ATCC 31821 / ZM4 / CP4).